The sequence spans 157 residues: Cyclic pyranopterin monophosphate synthase (157 aa).

Residues 74–76 and 112–113 each bind substrate; these read MCH and ME. Aspartate 127 is a catalytic residue.

Belongs to the MoaC family. In terms of assembly, homohexamer; trimer of dimers.

It catalyses the reaction (8S)-3',8-cyclo-7,8-dihydroguanosine 5'-triphosphate = cyclic pyranopterin phosphate + diphosphate. It participates in cofactor biosynthesis; molybdopterin biosynthesis. Functionally, catalyzes the conversion of (8S)-3',8-cyclo-7,8-dihydroguanosine 5'-triphosphate to cyclic pyranopterin monophosphate (cPMP). The protein is Cyclic pyranopterin monophosphate synthase of Syntrophomonas wolfei subsp. wolfei (strain DSM 2245B / Goettingen).